We begin with the raw amino-acid sequence, 535 residues long: Bifunctional purine biosynthesis protein PurH (535 aa).

Residues 6 to 151 (TRLPVRRALI…KNHKDVAIVV (146 aa)) form the MGS-like domain.

The protein belongs to the PurH family.

The catalysed reaction is (6R)-10-formyltetrahydrofolate + 5-amino-1-(5-phospho-beta-D-ribosyl)imidazole-4-carboxamide = 5-formamido-1-(5-phospho-D-ribosyl)imidazole-4-carboxamide + (6S)-5,6,7,8-tetrahydrofolate. It catalyses the reaction IMP + H2O = 5-formamido-1-(5-phospho-D-ribosyl)imidazole-4-carboxamide. It participates in purine metabolism; IMP biosynthesis via de novo pathway; 5-formamido-1-(5-phospho-D-ribosyl)imidazole-4-carboxamide from 5-amino-1-(5-phospho-D-ribosyl)imidazole-4-carboxamide (10-formyl THF route): step 1/1. It functions in the pathway purine metabolism; IMP biosynthesis via de novo pathway; IMP from 5-formamido-1-(5-phospho-D-ribosyl)imidazole-4-carboxamide: step 1/1. In Ectopseudomonas mendocina (strain ymp) (Pseudomonas mendocina), this protein is Bifunctional purine biosynthesis protein PurH.